The following is a 157-amino-acid chain: UPF0262 protein RL0614 (157 aa).

The protein belongs to the UPF0262 family.

The protein is UPF0262 protein RL0614 of Rhizobium johnstonii (strain DSM 114642 / LMG 32736 / 3841) (Rhizobium leguminosarum bv. viciae).